The chain runs to 295 residues: Energy-coupling factor transporter ATP-binding protein EcfA2 (295 aa).

The ABC transporter domain maps to I3–G246. ATP is bound at residue G40–S47.

The protein belongs to the ABC transporter superfamily. Energy-coupling factor EcfA family. Forms a stable energy-coupling factor (ECF) transporter complex composed of 2 membrane-embedded substrate-binding proteins (S component), 2 ATP-binding proteins (A component) and 2 transmembrane proteins (T component).

The protein localises to the cell membrane. ATP-binding (A) component of a common energy-coupling factor (ECF) ABC-transporter complex. Unlike classic ABC transporters this ECF transporter provides the energy necessary to transport a number of different substrates. The polypeptide is Energy-coupling factor transporter ATP-binding protein EcfA2 (Lactiplantibacillus plantarum (strain ATCC BAA-793 / NCIMB 8826 / WCFS1) (Lactobacillus plantarum)).